The primary structure comprises 360 residues: Photosystem II protein D1 3 (360 aa).

3 helical membrane passes run 29 to 46 (YVGW…TAAI), 118 to 133 (HFLI…QWEL), and 142 to 156 (WIPV…AATA). Residue His118 participates in chlorophyll a binding. Tyr126 provides a ligand contact to pheophytin a. [CaMn4O5] cluster contacts are provided by Asp170 and Glu189. The chain crosses the membrane as a helical span at residues 197–218 (FHMIGVAGVFGGALFSAMHGSL). Position 198 (His198) interacts with chlorophyll a. A quinone is bound by residues His215 and 264–265 (SF). His215 contributes to the Fe cation binding site. Fe cation is bound at residue His272. A helical transmembrane segment spans residues 274–288 (FLAAWPVIGIWFAAL). Residues His332, Glu333, Asp342, and Ala344 each coordinate [CaMn4O5] cluster. Positions 345 to 360 (SGEVQPIALTAPAIAS) are excised as a propeptide.

This sequence belongs to the reaction center PufL/M/PsbA/D family. PSII is composed of 1 copy each of membrane proteins PsbA, PsbB, PsbC, PsbD, PsbE, PsbF, PsbH, PsbI, PsbJ, PsbK, PsbL, PsbM, PsbT, PsbX, PsbY, PsbZ, Psb30/Ycf12, peripheral proteins PsbO, CyanoQ (PsbQ), PsbU, PsbV and a large number of cofactors. It forms dimeric complexes. The cofactor is The D1/D2 heterodimer binds P680, chlorophylls that are the primary electron donor of PSII, and subsequent electron acceptors. It shares a non-heme iron and each subunit binds pheophytin, quinone, additional chlorophylls, carotenoids and lipids. D1 provides most of the ligands for the Mn4-Ca-O5 cluster of the oxygen-evolving complex (OEC). There is also a Cl(-1) ion associated with D1 and D2, which is required for oxygen evolution. The PSII complex binds additional chlorophylls, carotenoids and specific lipids.. Post-translationally, tyr-161 forms a radical intermediate that is referred to as redox-active TyrZ, YZ or Y-Z. In terms of processing, C-terminally processed by CtpA; processing is essential to allow assembly of the oxygen-evolving complex and thus photosynthetic growth.

The protein resides in the cellular thylakoid membrane. It carries out the reaction 2 a plastoquinone + 4 hnu + 2 H2O = 2 a plastoquinol + O2. Functionally, photosystem II (PSII) is a light-driven water:plastoquinone oxidoreductase that uses light energy to abstract electrons from H(2)O, generating O(2) and a proton gradient subsequently used for ATP formation. It consists of a core antenna complex that captures photons, and an electron transfer chain that converts photonic excitation into a charge separation. The D1/D2 (PsbA/PsbD) reaction center heterodimer binds P680, the primary electron donor of PSII as well as several subsequent electron acceptors. This chain is Photosystem II protein D1 3, found in Nostoc sp. (strain PCC 7120 / SAG 25.82 / UTEX 2576).